The primary structure comprises 89 residues: Small ribosomal subunit protein uS15 (89 aa).

Belongs to the universal ribosomal protein uS15 family. As to quaternary structure, part of the 30S ribosomal subunit. Forms a bridge to the 50S subunit in the 70S ribosome, contacting the 23S rRNA.

One of the primary rRNA binding proteins, it binds directly to 16S rRNA where it helps nucleate assembly of the platform of the 30S subunit by binding and bridging several RNA helices of the 16S rRNA. In terms of biological role, forms an intersubunit bridge (bridge B4) with the 23S rRNA of the 50S subunit in the ribosome. The polypeptide is Small ribosomal subunit protein uS15 (Paramagnetospirillum magneticum (strain ATCC 700264 / AMB-1) (Magnetospirillum magneticum)).